Consider the following 89-residue polypeptide: Cell division topological specificity factor (89 aa).

It belongs to the MinE family.

Its function is as follows. Prevents the cell division inhibition by proteins MinC and MinD at internal division sites while permitting inhibition at polar sites. This ensures cell division at the proper site by restricting the formation of a division septum at the midpoint of the long axis of the cell. The polypeptide is Cell division topological specificity factor (Serratia proteamaculans (strain 568)).